Reading from the N-terminus, the 290-residue chain is 4-hydroxybenzoate octaprenyltransferase (290 aa).

8 consecutive transmembrane segments (helical) span residues 23 to 43, 46 to 66, 99 to 119, 141 to 161, 163 to 183, 212 to 232, 233 to 253, and 268 to 288; these read IGAL…TPGM, LWIL…GCVV, LFVV…AMTI, LPQV…FAAV, ESLP…AVAY, TLII…IGWL, NGLG…FVYQ, and AFMN…MSYW.

Belongs to the UbiA prenyltransferase family. The cofactor is Mg(2+).

The protein localises to the cell inner membrane. It catalyses the reaction all-trans-octaprenyl diphosphate + 4-hydroxybenzoate = 4-hydroxy-3-(all-trans-octaprenyl)benzoate + diphosphate. Its pathway is cofactor biosynthesis; ubiquinone biosynthesis. Its function is as follows. Catalyzes the prenylation of para-hydroxybenzoate (PHB) with an all-trans polyprenyl group. Mediates the second step in the final reaction sequence of ubiquinone-8 (UQ-8) biosynthesis, which is the condensation of the polyisoprenoid side chain with PHB, generating the first membrane-bound Q intermediate 3-octaprenyl-4-hydroxybenzoate. This Salmonella typhi protein is 4-hydroxybenzoate octaprenyltransferase.